The primary structure comprises 132 residues: MSVNDPIADMLTRIRNACMARHATVSIPSSKMKLAIAQILKREGFIQDFTVQEGKPYSTIVITLKYTPDRRPVITGLKRVSKPGLRIYTKRADIPRVRGGLGLSILSTPRGVMAGHEAWQQRVGGEVLCYVW.

This sequence belongs to the universal ribosomal protein uS8 family. Part of the 30S ribosomal subunit. Contacts proteins S5 and S12.

Its function is as follows. One of the primary rRNA binding proteins, it binds directly to 16S rRNA central domain where it helps coordinate assembly of the platform of the 30S subunit. The polypeptide is Small ribosomal subunit protein uS8 (Roseiflexus castenholzii (strain DSM 13941 / HLO8)).